A 121-amino-acid chain; its full sequence is MAMKCVAFVFTQGPHGNAAGREGLDALLATSALSENLGVFFLSDGVLQLLPQQQPEKILARNYIATFGVLPLYDVENFYICEDSLQQRGLSEVTDWILDVEVLSPVNLRRQLANYDVVLTF.

The protein belongs to the DsrF/TusC family. In terms of assembly, heterohexamer, formed by a dimer of trimers. The hexameric TusBCD complex contains 2 copies each of TusB, TusC and TusD. The TusBCD complex interacts with TusE.

The protein localises to the cytoplasm. In terms of biological role, part of a sulfur-relay system required for 2-thiolation of 5-methylaminomethyl-2-thiouridine (mnm(5)s(2)U) at tRNA wobble positions. The sequence is that of Protein TusC from Yersinia enterocolitica serotype O:8 / biotype 1B (strain NCTC 13174 / 8081).